A 393-amino-acid chain; its full sequence is Interferon regulatory factor 9 (393 aa).

The IRF tryptophan pentad repeat DNA-binding region spans threonine 9–proline 116. Disordered regions lie at residues valine 120–asparagine 151 and leucine 163–glutamine 202. Position 139 is a phosphoserine (serine 139).

The protein belongs to the IRF family. Interacts with STAT2 in the cytoplasm. Forms the interferon-stimulated gene factor 3 complex (ISGF3) with the heterodimer STAT1:STAT2; upon stimulation. As to quaternary structure, (Microbial infection) Interacts with measles virus V protein; this interaction prevents the binding of IRF9 to STAT2 and thereby the type I interferon signaling pathway. In terms of processing, (Microbial infection) Ubiquitinated by Herpes simplex virus 2 E3 ubiquitin ligase ICP22.

Its subcellular location is the cytoplasm. It localises to the nucleus. In terms of biological role, transcription factor that plays an essential role in anti-viral immunity. It mediates signaling by type I IFNs (IFN-alpha and IFN-beta). Following type I IFN binding to cell surface receptors, Jak kinases (TYK2 and JAK1) are activated, leading to tyrosine phosphorylation of STAT1 and STAT2. IRF9/ISGF3G associates with the phosphorylated STAT1:STAT2 dimer to form a complex termed ISGF3 transcription factor, that enters the nucleus. ISGF3 binds to the IFN stimulated response element (ISRE) to activate the transcription of interferon stimulated genes, which drive the cell in an antiviral state. This Homo sapiens (Human) protein is Interferon regulatory factor 9 (IRF9).